The chain runs to 364 residues: Methylthioribose-1-phosphate isomerase (364 aa).

Substrate is bound by residues 53–55, R90, and Q203; that span reads RGA. Residue D244 is the Proton donor of the active site. Substrate is bound at residue 254 to 255; it reads NK.

Belongs to the eIF-2B alpha/beta/delta subunits family. MtnA subfamily.

The catalysed reaction is 5-(methylsulfanyl)-alpha-D-ribose 1-phosphate = 5-(methylsulfanyl)-D-ribulose 1-phosphate. The protein operates within amino-acid biosynthesis; L-methionine biosynthesis via salvage pathway; L-methionine from S-methyl-5-thio-alpha-D-ribose 1-phosphate: step 1/6. Its function is as follows. Catalyzes the interconversion of methylthioribose-1-phosphate (MTR-1-P) into methylthioribulose-1-phosphate (MTRu-1-P). The chain is Methylthioribose-1-phosphate isomerase from Sinorhizobium medicae (strain WSM419) (Ensifer medicae).